We begin with the raw amino-acid sequence, 154 residues long: MPTVTEGRLIAKGMKFGIAVSRFNDFICSRLLDGALDALTRSGAEGKDIQVYRVPGAFELPLVAKKLAVSQRFEAVICLGAVIRGATPHFEYVSAEVSKGIANASLDTGVPIAFGVLTTDTIEQAIERAGTKAGNKGWDAAMTAIEMVDLLRQI.

5-amino-6-(D-ribitylamino)uracil contacts are provided by residues F23, 57–59 (AFE), and 81–83 (AVI). Residue 86 to 87 (AT) coordinates (2S)-2-hydroxy-3-oxobutyl phosphate. H89 acts as the Proton donor in catalysis. F114 contacts 5-amino-6-(D-ribitylamino)uracil. R128 is a binding site for (2S)-2-hydroxy-3-oxobutyl phosphate.

This sequence belongs to the DMRL synthase family.

It catalyses the reaction (2S)-2-hydroxy-3-oxobutyl phosphate + 5-amino-6-(D-ribitylamino)uracil = 6,7-dimethyl-8-(1-D-ribityl)lumazine + phosphate + 2 H2O + H(+). Its pathway is cofactor biosynthesis; riboflavin biosynthesis; riboflavin from 2-hydroxy-3-oxobutyl phosphate and 5-amino-6-(D-ribitylamino)uracil: step 1/2. Functionally, catalyzes the formation of 6,7-dimethyl-8-ribityllumazine by condensation of 5-amino-6-(D-ribitylamino)uracil with 3,4-dihydroxy-2-butanone 4-phosphate. This is the penultimate step in the biosynthesis of riboflavin. In Syntrophus aciditrophicus (strain SB), this protein is 6,7-dimethyl-8-ribityllumazine synthase.